Consider the following 188-residue polypeptide: Apolipoprotein M (188 aa).

The not cleaved signal peptide spans 1-22 (MFHQIWAALLYFYGIILNSIYQ). 3 cysteine pairs are disulfide-bonded: Cys23/Cys167, Cys95/Cys183, and Cys128/Cys157. Asn135 carries an N-linked (GlcNAc...) asparagine glycan. Positions 136 and 143 each coordinate tetradecanoate.

The protein belongs to the calycin superfamily. Lipocalin family. Highly divergent. Interacts with LRP2; LRP2 mediates APOM renal uptake and subsequent lysosomal degradation. As to expression, plasma protein. Expressed in liver and kidney.

It localises to the secreted. Its function is as follows. Probably involved in lipid transport. Can bind sphingosine-1-phosphate, myristic acid, palmitic acid and stearic acid, retinol, all-trans-retinoic acid and 9-cis-retinoic acid. The chain is Apolipoprotein M (APOM) from Homo sapiens (Human).